Here is a 156-residue protein sequence, read N- to C-terminus: ATP synthase subunit b (156 aa).

Residues 7–27 (FFAQMVVFFILWWVVAKFIWP) form a helical membrane-spanning segment.

The protein belongs to the ATPase B chain family. In terms of assembly, F-type ATPases have 2 components, F(1) - the catalytic core - and F(0) - the membrane proton channel. F(1) has five subunits: alpha(3), beta(3), gamma(1), delta(1), epsilon(1). F(0) has three main subunits: a(1), b(2) and c(10-14). The alpha and beta chains form an alternating ring which encloses part of the gamma chain. F(1) is attached to F(0) by a central stalk formed by the gamma and epsilon chains, while a peripheral stalk is formed by the delta and b chains.

The protein localises to the cell inner membrane. Its function is as follows. F(1)F(0) ATP synthase produces ATP from ADP in the presence of a proton or sodium gradient. F-type ATPases consist of two structural domains, F(1) containing the extramembraneous catalytic core and F(0) containing the membrane proton channel, linked together by a central stalk and a peripheral stalk. During catalysis, ATP synthesis in the catalytic domain of F(1) is coupled via a rotary mechanism of the central stalk subunits to proton translocation. In terms of biological role, component of the F(0) channel, it forms part of the peripheral stalk, linking F(1) to F(0). The protein is ATP synthase subunit b of Cupriavidus necator (strain ATCC 17699 / DSM 428 / KCTC 22496 / NCIMB 10442 / H16 / Stanier 337) (Ralstonia eutropha).